A 344-amino-acid polypeptide reads, in one-letter code: MLISGANPTHVSAALKRYDVEKLAVATVASHTALQILRGAKRFGFRTIAVAGRADAAEFYRQFGFIDEVWTADFRNFVKTAEKLVEANAVLVPHGSYVEYVGWRQALEAPVPTLGCRELIRWEADQYKKMELLQRAGVPTPRVYKTPEEVDRPVIVKLFGAKGGRGYFLARDREELRRRLAGLGEYIIQEYVFGVPAYYHFFSSPVYGRVEVFGADIRYESNVDGRTFGWVEPTFVVVGNLPLVLRESLLPTIWKYGVQFAKAVEEAVGCRLAGPYCLESIIRDDMSISVFEFSGRIVAGTNIYMGYGSPYSVLYFDRPMDMGERIAHEIREAARRGRLEDLFT.

Histidine 31 and serine 96 together coordinate 5-amino-1-(5-phospho-beta-D-ribosyl)imidazole-4-carboxamide. Residues methionine 130–glutamate 324 enclose the ATP-grasp domain. Residues proline 153–tyrosine 198 and glutamate 220 each bind ATP. Position 240 (asparagine 240) interacts with 5-amino-1-(5-phospho-beta-D-ribosyl)imidazole-4-carboxamide. Mg(2+) is bound by residues glutamate 279 and glutamate 292.

Belongs to the phosphohexose mutase family. Mg(2+) serves as cofactor. The cofactor is Mn(2+).

It carries out the reaction 5-amino-1-(5-phospho-beta-D-ribosyl)imidazole-4-carboxamide + formate + ATP = 5-formamido-1-(5-phospho-D-ribosyl)imidazole-4-carboxamide + ADP + phosphate. Its pathway is purine metabolism; IMP biosynthesis via de novo pathway; 5-formamido-1-(5-phospho-D-ribosyl)imidazole-4-carboxamide from 5-amino-1-(5-phospho-D-ribosyl)imidazole-4-carboxamide (formate route): step 1/1. In terms of biological role, catalyzes the ATP- and formate-dependent formylation of 5-aminoimidazole-4-carboxamide-1-beta-d-ribofuranosyl 5'-monophosphate (AICAR) to 5-formaminoimidazole-4-carboxamide-1-beta-d-ribofuranosyl 5'-monophosphate (FAICAR) in the absence of folates. The polypeptide is 5-formaminoimidazole-4-carboxamide-1-(beta)-D-ribofuranosyl 5'-monophosphate synthetase (Pyrobaculum neutrophilum (strain DSM 2338 / JCM 9278 / NBRC 100436 / V24Sta) (Thermoproteus neutrophilus)).